We begin with the raw amino-acid sequence, 130 residues long: uncharacterized protein (130 aa).

The segment at 48–130 is disordered; the sequence is RGYWPQGPPP…LIAAMEEDER (83 aa). Residues 80–107 show a composition bias toward gly residues; sequence GGDGGGDAGAGPSGVAGTAAGGAGGDGA.

This is an uncharacterized protein from Aotus trivirgatus (Three-striped night monkey).